Reading from the N-terminus, the 343-residue chain is MSLFVASTRSAFRAAAPIKRSFQTRRSYATEPSKGGSSSTILLGAAAVGLAGAGAYFFSGAGAAKKAEASVKQVTEKITPGEIKKAFVGGDQGWLSLKLEEVELVNHNTKRLRFRLPEDDMVSGLHVASAILTKFKPIDAEKAVLRPYTPISDESAQGYIDLLVKKYEGGPMSTYLHDMAPGQRLDIKGPLPKYPWEANKHKHIALVAGGTGITPMYQLIRAIFNNPDDKTKVTLVFGNVSEEDVLLKHELATIENHYPQRFRAFYVLDNPPKEWAGNKGYINKDLLKTVLPEPKNEDIKIFVCGPPGMMNSISGNKKSPRDQGELTGILKELGYSPDQVYKF.

The helical transmembrane segment at 41 to 61 (ILLGAAAVGLAGAGAYFFSGA) threads the bilayer. One can recognise an FAD-binding FR-type domain in the interval 92–197 (QGWLSLKLEE…KGPLPKYPWE (106 aa)). Residue 200–235 (KHKHIALVAGGTGITPMYQLIRAIFNNPDDKTKVTL) participates in FAD binding.

Belongs to the flavoprotein pyridine nucleotide cytochrome reductase family. Requires FAD as cofactor.

It localises to the mitochondrion outer membrane. It carries out the reaction 2 Fe(III)-[cytochrome b5] + NADH = 2 Fe(II)-[cytochrome b5] + NAD(+) + H(+). Its function is as follows. May mediate the reduction of outer membrane cytochrome b5. This Neurospora crassa (strain ATCC 24698 / 74-OR23-1A / CBS 708.71 / DSM 1257 / FGSC 987) protein is NADH-cytochrome b5 reductase 2 (mcr-1).